Reading from the N-terminus, the 298-residue chain is S-adenosyl-L-methionine-dependent methyltransferase dpfgK (298 aa).

The protein belongs to the methyltransferase superfamily.

Its pathway is secondary metabolite biosynthesis; terpenoid biosynthesis. Functionally, S-adenosyl-L-methionine-dependent methyltransferase; part of the gene cluster that mediates the biosynthesis of diterpenoid pyrones. The first step of the pathway is the synthesis of the alpha-pyrone moiety by the polyketide synthase dpfgA via condensation of one acetyl-CoA starter unit with 3 malonyl-CoA units and 2 methylations. The alpha-pyrone is then combined with geranylgeranyl pyrophosphate (GGPP) formed by the GGPP synthase dpfgD through the action of the prenyltransferase dpfgC to yield a linear alpha-pyrone diterpenoid. Subsequent steps in the diterpenoid pyrone biosynthetic pathway involve the decalin core formation, which is initiated by the epoxidation of the C10-C11 olefin by the FAD-dependent oxidoreductase dpfgE, and is followed by a cyclization cascade catalyzed by the terpene cyclase dpfgB. The short chain dehydrogenase/reductase dpfgG then oxidizes the 8S hydroxy group to a ketone and the short chain dehydrogenase/reductase dpfgH reduces the ketone to the 8R hydroxy group to yield higginsianin B. Higginsianin B is further methylated by the methyltransferase dpfgI to produce the intermediate named FDDP B. The cytochrome P450 monooxygenase dfgpJ then catalyzes a three-step oxidation at C-27 to generate a carboxylic acid as well as C-26 hydroxylation. Finally, methyltransferase dpfgK methylates the carboxylic acid generated by dpfgJ, yielding the final diterpenoid pyrones from the pathway which were named FDDP D and FDDP E. This is S-adenosyl-L-methionine-dependent methyltransferase dpfgK from Gibberella zeae (strain ATCC MYA-4620 / CBS 123657 / FGSC 9075 / NRRL 31084 / PH-1) (Wheat head blight fungus).